Reading from the N-terminus, the 341-residue chain is 3-keto-steroid reductase/17-beta-hydroxysteroid dehydrogenase 7 (341 aa).

Topologically, residues 1–229 (MRKVVLITGA…VACPGTALTN (229 aa)) are extracellular. 8 to 15 (TGASSGIG) contacts NAD(+). Asn37 carries an N-linked (GlcNAc...) asparagine glycan. Ser171 is a substrate binding site. Residue Asn178 is glycosylated (N-linked (GlcNAc...) asparagine). Tyr193 functions as the Proton acceptor in the catalytic mechanism. N-linked (GlcNAc...) asparagine glycosylation occurs at Asn229. Residues 230 to 250 (LTYGILPPFIWTLLMPAILLL) form a helical membrane-spanning segment. At 251-341 (RFFANAFTLT…NQARLSGSCL (91 aa)) the chain is on the cytoplasmic side.

It belongs to the short-chain dehydrogenases/reductases (SDR) family. ERG27 subfamily. Binds to the short form of prolactin receptor. Phosphorylated. Highly expressed in adrenal gland, liver, lung and thymus. Expressed in breast, ovaries, pituitary gland, pregnant uterus, prostate, kidney, lymph node, small intestine, spinal cord and trachea. Weakly expressed in all other tissues tested. As to expression, expressed in eye ciliary epithelial cells and neuroendocrine cells.

Its subcellular location is the endoplasmic reticulum membrane. It catalyses the reaction 17beta-estradiol + NADP(+) = estrone + NADPH + H(+). It carries out the reaction a 3beta-hydroxysteroid + NADP(+) = a 3-oxosteroid + NADPH + H(+). The enzyme catalyses 3-dehydro-4alpha-methylzymosterol + NADPH + H(+) = 4alpha-methylzymosterol + NADP(+). The catalysed reaction is zymosterone + NADPH + H(+) = zymosterol + NADP(+). It catalyses the reaction 4alpha-methyl-5alpha-cholest-8-en-3-one + NADPH + H(+) = 4alpha-methyl-5alpha-cholest-8-en-3beta-ol + NADP(+). It carries out the reaction 4alpha-methyl-5alpha-cholest-7-en-3beta-ol + NADP(+) = 4alpha-methyl-5alpha-cholest-7-en-3-one + NADPH + H(+). The enzyme catalyses 5alpha-cholest-8-en-3-one + NADPH + H(+) = 5alpha-cholest-8-en-3beta-ol + NADP(+). The catalysed reaction is 5alpha-androstane-3beta,17beta-diol + NADP(+) = 17beta-hydroxy-5alpha-androstan-3-one + NADPH + H(+). It catalyses the reaction progesterone + NADPH + H(+) = 3beta-hydroxypregn-4-ene-20-one + NADP(+). The protein operates within steroid biosynthesis; estrogen biosynthesis. It functions in the pathway steroid biosynthesis; zymosterol biosynthesis; zymosterol from lanosterol: step 5/6. With respect to regulation, estradiol 17-beta-dehydrogenase and dihydrotestosterone oxidoreductase activities are selectively inhibited by 4-methyl-4-aza-5alpha-androstane derivatives, such as 17beta-[(N-Heptyl)methylamino]-4-aza-5r-androstan-3-one and 17beta-(N-Decylformamido)-4-aza-5r-androstan-3-one. Bifunctional enzyme involved in steroid-hormone metabolism and cholesterol biosynthesis. Catalyzes the NADP(H)-dependent reduction of estrogens and androgens and regulates the biological potency of these steroids. Converts estrone (E1) to a more potent estrogen, 17beta-estradiol (E2). Converts dihydrotestosterone (DHT) to its inactive form 5a-androstane-3b,17b-diol. Converts moderately progesterone to 3beta-hydroxypregn-4-ene-20-one, leading to its inactivation. Additionally, participates in the post-squalene cholesterol biosynthesis, as a 3-ketosteroid reductase. In terms of biological role, does not have enzymatic activities toward E1 and DHT. This is 3-keto-steroid reductase/17-beta-hydroxysteroid dehydrogenase 7 (HSD17B7) from Homo sapiens (Human).